The sequence spans 327 residues: GTPase Obg (327 aa).

One can recognise an Obg domain in the interval 1 to 159 (MQFIDQANII…WEVQLELKLL (159 aa)). The 168-residue stretch at 160-327 (AEVGIIGLPN…SLLSEVWKRI (168 aa)) folds into the OBG-type G domain. ATP is bound by residues 166-173 (GLPNAGKS), 191-195 (FTTLI), 213-216 (DIPG), 280-283 (NKME), and 309-311 (SSS). 2 residues coordinate Mg(2+): serine 173 and threonine 193.

This sequence belongs to the TRAFAC class OBG-HflX-like GTPase superfamily. OBG GTPase family. Monomer. Requires Mg(2+) as cofactor.

The protein localises to the cytoplasm. In terms of biological role, an essential GTPase which binds GTP, GDP and possibly (p)ppGpp with moderate affinity, with high nucleotide exchange rates and a fairly low GTP hydrolysis rate. Plays a role in control of the cell cycle, stress response, ribosome biogenesis and in those bacteria that undergo differentiation, in morphogenesis control. This chain is GTPase Obg, found in Prochlorococcus marinus (strain MIT 9301).